The sequence spans 274 residues: MPELPEVETCLRGIEPYLAGQTIQQIVIRTPKLRWPISAELCAMSGAKILALSRRAKYLIIHTERGDILVHLGMSGSLTLLNSSQPTKASKHDHVDLITEAGIILRYNDPRKFGAWLWAKQAENYPLITKLGPEPLSDTFTSDYLFKKSRNKTVAVKNFIMNNDIVVGVGNIYASESLFMAGVHPELAAQNLTEKQCVQLRNVIQAVLTKAIIQGGTTLKDFTQPDGKPGYFAQVLQVYGRKGEECRECGTLIQAKVIGQRNSYFCPDCQPLPK.

The active-site Schiff-base intermediate with DNA is Pro-2. The Proton donor role is filled by Glu-3. Catalysis depends on Lys-57, which acts as the Proton donor; for beta-elimination activity. The DNA site is built by His-92, Arg-111, and Lys-152. The FPG-type zinc finger occupies 237–271 (QVYGRKGEECRECGTLIQAKVIGQRNSYFCPDCQP). The active-site Proton donor; for delta-elimination activity is Arg-261.

It belongs to the FPG family. Monomer. Zn(2+) serves as cofactor.

It catalyses the reaction Hydrolysis of DNA containing ring-opened 7-methylguanine residues, releasing 2,6-diamino-4-hydroxy-5-(N-methyl)formamidopyrimidine.. The catalysed reaction is 2'-deoxyribonucleotide-(2'-deoxyribose 5'-phosphate)-2'-deoxyribonucleotide-DNA = a 3'-end 2'-deoxyribonucleotide-(2,3-dehydro-2,3-deoxyribose 5'-phosphate)-DNA + a 5'-end 5'-phospho-2'-deoxyribonucleoside-DNA + H(+). Functionally, involved in base excision repair of DNA damaged by oxidation or by mutagenic agents. Acts as a DNA glycosylase that recognizes and removes damaged bases. Has a preference for oxidized purines, such as 7,8-dihydro-8-oxoguanine (8-oxoG). Has AP (apurinic/apyrimidinic) lyase activity and introduces nicks in the DNA strand. Cleaves the DNA backbone by beta-delta elimination to generate a single-strand break at the site of the removed base with both 3'- and 5'-phosphates. The polypeptide is Formamidopyrimidine-DNA glycosylase (Haemophilus ducreyi (strain 35000HP / ATCC 700724)).